The primary structure comprises 268 residues: Small ribosomal subunit protein uS10m (268 aa).

A mitochondrion-targeting transit peptide spans 1–64 (MIIRPVVRSL…RITTTTEAPK (64 aa)).

The protein belongs to the universal ribosomal protein uS10 family. In terms of assembly, component of the mitochondrial small ribosomal subunit (mt-SSU). Mature N.crassa 74S mitochondrial ribosomes consist of a small (37S) and a large (54S) subunit. The 37S small subunit contains a 16S ribosomal RNA (16S mt-rRNA) and 32 different proteins. The 54S large subunit contains a 23S rRNA (23S mt-rRNA) and 42 different proteins.

It localises to the mitochondrion. Its function is as follows. Component of the mitochondrial ribosome (mitoribosome), a dedicated translation machinery responsible for the synthesis of mitochondrial genome-encoded proteins, including at least some of the essential transmembrane subunits of the mitochondrial respiratory chain. The mitoribosomes are attached to the mitochondrial inner membrane and translation products are cotranslationally integrated into the membrane. In Neurospora crassa (strain ATCC 24698 / 74-OR23-1A / CBS 708.71 / DSM 1257 / FGSC 987), this protein is Small ribosomal subunit protein uS10m (mrp-10).